A 200-amino-acid chain; its full sequence is Nitrile hydratase subunit alpha (200 aa).

Residues Cys105, Cys108, Ser109, and Cys110 each coordinate Fe(3+). At Cys108 the chain carries Cysteine sulfinic acid (-SO2H). Cys110 bears the Cysteine sulfenic acid (-SOH) mark.

This sequence belongs to the nitrile hydratase subunit alpha family. As to quaternary structure, heterodimer of an alpha and a beta chain. The cofactor is Fe(3+). In terms of processing, oxidation on Cys-108 is essential for the activity. Oxidation on Cys-110 stabilizes the Fe-NO ligand coordinated in the inactive form.

The catalysed reaction is an aliphatic primary amide = an aliphatic nitrile + H2O. With respect to regulation, inactivated by oxidation of Cys-110 to a sulfenic acid. NHase catalyzes the hydration of various nitrile compounds to the corresponding amides. Industrial production of acrylamide is now being developed using some of the enzymes of this class. The sequence is that of Nitrile hydratase subunit alpha (nthA) from Pseudomonas chlororaphis (Pseudomonas aureofaciens).